Here is a 138-residue protein sequence, read N- to C-terminus: MALMPKRVKHRKSQRGRIKGNATRGNTVVFGDYGIQSLDAGWIKATTIEAGRIAAQQYVRGQGKLYIRIFPDKSVTSTPLETRMGKGKGEPDFWAAVVKPGTILYELSGVTEQQAKVCFARLASKMPVKVRFVERRSA.

Positions 1 to 18 (MALMPKRVKHRKSQRGRI) are enriched in basic residues. Residues 1–21 (MALMPKRVKHRKSQRGRIKGN) form a disordered region.

It belongs to the universal ribosomal protein uL16 family. In terms of assembly, part of the 50S ribosomal subunit.

Binds 23S rRNA and is also seen to make contacts with the A and possibly P site tRNAs. The polypeptide is Large ribosomal subunit protein uL16 (Rhodopirellula baltica (strain DSM 10527 / NCIMB 13988 / SH1)).